The sequence spans 37 residues: Large ribosomal subunit protein bL36c (37 aa).

The protein belongs to the bacterial ribosomal protein bL36 family.

It localises to the plastid. It is found in the chloroplast. The sequence is that of Large ribosomal subunit protein bL36c from Populus alba (White poplar).